Reading from the N-terminus, the 467-residue chain is E3 ubiquitin-protein ligase TRIM11 (467 aa).

An RING-type zinc finger spans residues 16-57; that stretch reads CAICLDYFTDPVMTDCGHNFCRECIRRCWGQPEGPYACPECR. Phosphoserine is present on serine 85. The B box-type zinc-finger motif lies at 87–127; it reads VPQGVCAAHREPLTTFCGDDLSLLCPTCERSEHWAHRVRPL. Cysteine 92, histidine 95, cysteine 114, and histidine 119 together coordinate Zn(2+). A coiled-coil region spans residues 127 to 207; that stretch reads LQEAADDLKG…KLEEEELEVL (81 aa). Residues 267-460 enclose the B30.2/SPRY domain; that stretch reads ELRTVCRVPG…MTICRLIGVS (194 aa). Residues 304 to 313 show a composition bias toward basic and acidic residues; sequence DRRSVQRGEQ. The segment at 304-325 is disordered; the sequence is DRRSVQRGEQRQALPDSPERFD.

The protein belongs to the TRIM/RBCC family. In terms of assembly, binds cytoplasmic tail of integrin alpha-1. Interacts with the HN peptide. Interacts with PHOX2B. Interacts (when autoubiquitinated) with SQSTM1/p62; promoting AIM2 recruitment to autophagosomes. Interacts with AIM2; promoting its autophagy-dependent degradation. Post-translationally, autoubiquitinated upon DNA stimulation; autoubiquitination promotes interaction with SQSTM1/p62 and recruitment of AIM2 to autophagosomes.

It is found in the cytoplasm. The protein resides in the nucleus. The enzyme catalyses S-ubiquitinyl-[E2 ubiquitin-conjugating enzyme]-L-cysteine + [acceptor protein]-L-lysine = [E2 ubiquitin-conjugating enzyme]-L-cysteine + N(6)-ubiquitinyl-[acceptor protein]-L-lysine.. Its pathway is protein modification; protein ubiquitination. Its function is as follows. E3 ubiquitin-protein ligase that promotes the degradation of insoluble ubiquitinated proteins, including insoluble PAX6, poly-Gln repeat expanded HTT and poly-Ala repeat expanded ARX. Mediates PAX6 ubiquitination leading to proteasomal degradation, thereby modulating cortical neurogenesis. May also inhibit PAX6 transcriptional activity, possibly in part by preventing the binding of PAX6 to its consensus sequences. May contribute to the regulation of the intracellular level of HN (humanin) or HN-containing proteins through the proteasomal degradation pathway. Mediates MED15 ubiquitination leading to proteasomal degradation. May contribute to the innate restriction of retroviruses. Upon overexpression, reduces HIV-1 and murine leukemia virus infectivity, by suppressing viral gene expression. Antiviral activity depends on a functional E3 ubiquitin-protein ligase domain. May regulate TRIM5 turnover via the proteasome pathway, thus counteracting the TRIM5-mediated cross-species restriction of retroviral infection at early stages of the retroviral life cycle. Acts as an inhibitor of the AIM2 inflammasome by promoting autophagy-dependent degradation of AIM2. Mechanistically, undergoes autoubiquitination upon DNA stimulation, promoting interaction with AIM2 and SQSTM1/p62, leading to AIM2 recruitment to autophagosomes. In Rattus norvegicus (Rat), this protein is E3 ubiquitin-protein ligase TRIM11 (Trim11).